Reading from the N-terminus, the 702-residue chain is Putative endo-beta-N-acetylglucosaminidase (702 aa).

A signal peptide spans 1 to 23 (MKKVRFIFLALLFFLASPEGAMA). Cell wall-binding repeat units lie at residues 42–63 (ANEW…DANY), 65–84 (ENEW…GGYM), 86–105 (KSEW…DGKM), 124–145 (IEDW…DGQH), 147–166 (EKEW…GGYL), 185–206 (QQGW…NGNY), 208–227 (DKEW…GGYM), 229–248 (ANEW…DGKI), 250–271 (EKEW…GGYM), 273–292 (ANEW…DGKM), 294–315 (EKEW…GGYM), 317–336 (ANEW…DGKI), 338–359 (EKEW…GGYM), 361–380 (ANEW…DGKM), and 382–403 (EKEW…GGYM).

Belongs to the glycosyl hydrolase 73 family.

Its subcellular location is the secreted. The catalysed reaction is an N(4)-(oligosaccharide-(1-&gt;3)-[oligosaccharide-(1-&gt;6)]-beta-D-Man-(1-&gt;4)-beta-D-GlcNAc-(1-&gt;4)-alpha-D-GlcNAc)-L-asparaginyl-[protein] + H2O = an oligosaccharide-(1-&gt;3)-[oligosaccharide-(1-&gt;6)]-beta-D-Man-(1-&gt;4)-D-GlcNAc + N(4)-(N-acetyl-beta-D-glucosaminyl)-L-asparaginyl-[protein]. Its function is as follows. Plays an important role in cell wall degradation and cell separation. The sequence is that of Putative endo-beta-N-acetylglucosaminidase (lytB) from Streptococcus pneumoniae (strain ATCC BAA-255 / R6).